Reading from the N-terminus, the 86-residue chain is Large ribosomal subunit protein eL43 (86 aa).

Zn(2+) is bound by residues Cys-38, Cys-41, Cys-57, and Cys-60. The C4-type zinc-finger motif lies at 38-60; that stretch reads CPFCGSTGTVRRVSVGVWSCRKC.

Belongs to the eukaryotic ribosomal protein eL43 family. Putative zinc-binding subfamily. As to quaternary structure, part of the 50S ribosomal subunit. It depends on Zn(2+) as a cofactor.

In terms of biological role, binds to the 23S rRNA. The polypeptide is Large ribosomal subunit protein eL43 (Aeropyrum pernix (strain ATCC 700893 / DSM 11879 / JCM 9820 / NBRC 100138 / K1)).